Here is a 42-residue protein sequence, read N- to C-terminus: Potassium channel toxin gamma-KTx 1.2 (42 aa).

4 cysteine pairs are disulfide-bonded: C5–C23, C11–C34, C20–C39, and C24–C41.

It belongs to the ergtoxin family. Gamma-KTx 1 subfamily. Expressed by the venom gland.

The protein resides in the secreted. Functionally, blocks Kv11/ERG potassium channels. The sequence is that of Potassium channel toxin gamma-KTx 1.2 from Centruroides elegans (Bark scorpion).